The following is a 376-amino-acid chain: N-acetyldiaminopimelate deacetylase (376 aa).

Asp69 is an active-site residue. Glu128 functions as the Proton acceptor in the catalytic mechanism.

This sequence belongs to the peptidase M20A family. N-acetyldiaminopimelate deacetylase subfamily.

It carries out the reaction N-acetyl-(2S,6S)-2,6-diaminopimelate + H2O = (2S,6S)-2,6-diaminopimelate + acetate. The protein operates within amino-acid biosynthesis; L-lysine biosynthesis via DAP pathway; LL-2,6-diaminopimelate from (S)-tetrahydrodipicolinate (acetylase route): step 3/3. Catalyzes the conversion of N-acetyl-diaminopimelate to diaminopimelate and acetate. The chain is N-acetyldiaminopimelate deacetylase from Streptococcus pneumoniae (strain Hungary19A-6).